Reading from the N-terminus, the 111-residue chain is Fertilization-influencing membrane protein (111 aa).

An N-terminal signal peptide occupies residues 1 to 23 (MKLWLWVAVGVWMLMAELGTIET). The chain crosses the membrane as a helical span at residues 85–105 (ILVGTLVVAFFFLLFQFCLHV).

As to expression, testis-specific.

It localises to the cell membrane. Its subcellular location is the secreted. Plays a role in sperm-oocyte fusion process during fertilization. The polypeptide is Fertilization-influencing membrane protein (Mus musculus (Mouse)).